A 344-amino-acid polypeptide reads, in one-letter code: Transcription factor JunB (344 aa).

Glycyl lysine isopeptide (Lys-Gly) (interchain with G-Cter in SUMO2) cross-links involve residues lysine 4, lysine 33, and lysine 36. Over residues 51–65 (KGPGARGPGPEGSGA) the composition is skewed to gly residues. The interval 51 to 75 (KGPGARGPGPEGSGAGSYFSGQGSD) is disordered. Residue lysine 81 forms a Glycyl lysine isopeptide (Lys-Gly) (interchain with G-Cter in SUMO2) linkage. Residues threonine 102 and threonine 104 each carry the phosphothreonine modification. Serine 117 carries the post-translational modification Phosphoserine. Lysine 138 participates in a covalent cross-link: Glycyl lysine isopeptide (Lys-Gly) (interchain with G-Cter in SUMO2). Disordered stretches follow at residues 181-202 (NLSS…VGTG) and 237-257 (KEEP…PVSP). Positions 183-192 (SSYSPASAPS) are enriched in low complexity. Lysine 237 is modified (N6-acetyllysine; alternate). Lysine 237 participates in a covalent cross-link: Glycyl lysine isopeptide (Lys-Gly) (interchain with G-Cter in SUMO1); alternate. Residue lysine 237 forms a Glycyl lysine isopeptide (Lys-Gly) (interchain with G-Cter in SUMO2); alternate linkage. Residues 237 to 250 (KEEPQTVPEARSRD) show a composition bias toward basic and acidic residues. Serine 248 is modified (phosphoserine). Residue threonine 252 is modified to Phosphothreonine. Serine 256 is modified (phosphoserine). The segment at 265-292 (RIKVERKRLRNRLAATKCRKRKLERIAR) is basic motif. Residues 265–328 (RIKVERKRLR…AQLKQKVMTH (64 aa)) form the bZIP domain. The leucine-zipper stretch occupies residues 293 to 321 (LEDKVKTLKAENAGLSSAAGLLREQVAQL). Lysine 340 participates in a covalent cross-link: Glycyl lysine isopeptide (Lys-Gly) (interchain with G-Cter in SUMO2).

It belongs to the bZIP family. Jun subfamily. As to quaternary structure, binds DNA as a homodimer or as a heterodimer with another member of the Jun/Fos family. Component of an AP-1 transcription factor complex composed of JUN-FOS heterodimers. As part of the AP-1 transcription factor complex, forms heterodimers with FOSB, thereby binding to the AP-1 consensus sequence and stimulating transcription. Interacts with NFE2 (via its WW domains). Post-translationally, ubiquitinated by ITCH, leading to its degradation.

It localises to the nucleus. Functionally, transcription factor involved in regulating gene activity following the primary growth factor response. Binds to the DNA sequence 5'-TGA[GC]TCA-3'. Heterodimerizes with proteins of the FOS family to form an AP-1 transcription complex, thereby enhancing its DNA binding activity to an AP-1 consensus sequence 5'-TGA[GC]TCA-3' and enhancing its transcriptional activity. The sequence is that of Transcription factor JunB (Junb) from Mus musculus (Mouse).